The chain runs to 50 residues: Omwaprin-a (50 aa).

Positions 3–47 (RPKKPGLCPPRPQKPCVKECKNDDSCPGQQKCCNYGCKDECRDPI) constitute a WAP domain. Disulfide bonds link C10/C35, C18/C39, C22/C34, and C28/C43.

Belongs to the venom waprin family. As to expression, expressed by the venom gland.

It is found in the secreted. Its function is as follows. Damages membranes of susceptible bacteria. Has antibacterial activity against the Gram-positive bacteria B.megaterium and S.warneri. After a 45-minute treatment with this protein, B.megaterium have no visible pili and are smooth. Has no antibacterial activity against the Gram-positive bacteria B.thuringiensis, S.aureus, S.clavuligerus and B.anthracis, or the Gram-negative bacteria E.coli and A.tumefaciens. Has no hemolytic activity. Does not inhibit the proteinases elastase and cathepsin G. Is not toxic to mice. The chain is Omwaprin-a from Oxyuranus microlepidotus (Inland taipan).